Consider the following 481-residue polypeptide: Cis-aconitate decarboxylase (481 aa).

The tract at residues 462 to 481 (SPPEVASNSPACNNSITNLS) is disordered. The span at 467-481 (ASNSPACNNSITNLS) shows a compositional bias: polar residues.

The protein belongs to the PrpD family. Homodimer. As to expression, expressed in LPS-tolerized macrophages (at protein level). Expressed in peripheral blood mononuclear cells (PBMCs), microglia and macrophage cells.

It localises to the mitochondrion. The enzyme catalyses cis-aconitate + H(+) = itaconate + CO2. In terms of biological role, cis-aconitate decarboxylase that catalyzes production of itaconate and is involved in the inhibition of the inflammatory response. Acts as a negative regulator of the Toll-like receptors (TLRs)-mediated inflammatory innate response by stimulating the tumor necrosis factor alpha-induced protein TNFAIP3 expression via reactive oxygen species (ROS) in LPS-tolerized macrophages. Involved in antimicrobial response of innate immune cells; ACOD1-mediated itaconic acid production contributes to the antimicrobial activity of macrophages by generating itaconate, leading to alkylation of proteins, such as TFEB. Involved in antiviral response following infection by flavivirus in neurons: ACOD1-mediated itaconate production inhibits the activity of succinate dehydrogenase, generating a metabolic state in neurons that suppresses replication of viral genomes. Plays a role in the embryo implantation. In Homo sapiens (Human), this protein is Cis-aconitate decarboxylase.